A 500-amino-acid chain; its full sequence is Aspartyl/glutamyl-tRNA(Asn/Gln) amidotransferase subunit B (500 aa).

This sequence belongs to the GatB/GatE family. GatB subfamily. Heterotrimer of A, B and C subunits.

The catalysed reaction is L-glutamyl-tRNA(Gln) + L-glutamine + ATP + H2O = L-glutaminyl-tRNA(Gln) + L-glutamate + ADP + phosphate + H(+). The enzyme catalyses L-aspartyl-tRNA(Asn) + L-glutamine + ATP + H2O = L-asparaginyl-tRNA(Asn) + L-glutamate + ADP + phosphate + 2 H(+). Its function is as follows. Allows the formation of correctly charged Asn-tRNA(Asn) or Gln-tRNA(Gln) through the transamidation of misacylated Asp-tRNA(Asn) or Glu-tRNA(Gln) in organisms which lack either or both of asparaginyl-tRNA or glutaminyl-tRNA synthetases. The reaction takes place in the presence of glutamine and ATP through an activated phospho-Asp-tRNA(Asn) or phospho-Glu-tRNA(Gln). The polypeptide is Aspartyl/glutamyl-tRNA(Asn/Gln) amidotransferase subunit B (Allorhizobium ampelinum (strain ATCC BAA-846 / DSM 112012 / S4) (Agrobacterium vitis (strain S4))).